The chain runs to 286 residues: Pantothenate synthetase (286 aa).

30–37 (MGNLHAGH) is a binding site for ATP. The active-site Proton donor is the H37. (R)-pantoate is bound at residue Q61. Q61 provides a ligand contact to beta-alanine. 149-152 (GEKD) is a binding site for ATP. Q155 contributes to the (R)-pantoate binding site. Residues V178 and 186 to 189 (MSSR) each bind ATP.

This sequence belongs to the pantothenate synthetase family. Homodimer.

Its subcellular location is the cytoplasm. It catalyses the reaction (R)-pantoate + beta-alanine + ATP = (R)-pantothenate + AMP + diphosphate + H(+). The protein operates within cofactor biosynthesis; (R)-pantothenate biosynthesis; (R)-pantothenate from (R)-pantoate and beta-alanine: step 1/1. Its function is as follows. Catalyzes the condensation of pantoate with beta-alanine in an ATP-dependent reaction via a pantoyl-adenylate intermediate. The chain is Pantothenate synthetase from Methylococcus capsulatus (strain ATCC 33009 / NCIMB 11132 / Bath).